The chain runs to 252 residues: Adenosylcobinamide-GDP ribazoletransferase (252 aa).

Helical transmembrane passes span 4–24, 38–58, 60–80, 113–133, 141–161, 190–210, and 232–252; these read LFKG…PYVE, PIIG…INYL, ISIV…TGML, FSVI…HSFL, ILMF…ITII, LVCI…LLIV, and VAGF…CLFT.

It belongs to the CobS family. Mg(2+) is required as a cofactor.

The protein resides in the cell membrane. The enzyme catalyses alpha-ribazole + adenosylcob(III)inamide-GDP = adenosylcob(III)alamin + GMP + H(+). The catalysed reaction is alpha-ribazole 5'-phosphate + adenosylcob(III)inamide-GDP = adenosylcob(III)alamin 5'-phosphate + GMP + H(+). Its pathway is cofactor biosynthesis; adenosylcobalamin biosynthesis; adenosylcobalamin from cob(II)yrinate a,c-diamide: step 7/7. Joins adenosylcobinamide-GDP and alpha-ribazole to generate adenosylcobalamin (Ado-cobalamin). Also synthesizes adenosylcobalamin 5'-phosphate from adenosylcobinamide-GDP and alpha-ribazole 5'-phosphate. The chain is Adenosylcobinamide-GDP ribazoletransferase from Clostridium botulinum (strain Eklund 17B / Type B).